Reading from the N-terminus, the 959-residue chain is Isoleucine--tRNA ligase (959 aa).

The 'HIGH' region signature appears at 66-76 (PYANGDIHIGH). Glutamate 592 contributes to the L-isoleucyl-5'-AMP binding site. Positions 633 to 637 (KMSKS) match the 'KMSKS' region motif. Lysine 636 serves as a coordination point for ATP. Cysteine 922, cysteine 925, cysteine 942, and cysteine 945 together coordinate Zn(2+).

Belongs to the class-I aminoacyl-tRNA synthetase family. IleS type 1 subfamily. In terms of assembly, monomer. It depends on Zn(2+) as a cofactor.

It is found in the cytoplasm. The catalysed reaction is tRNA(Ile) + L-isoleucine + ATP = L-isoleucyl-tRNA(Ile) + AMP + diphosphate. Its function is as follows. Catalyzes the attachment of isoleucine to tRNA(Ile). As IleRS can inadvertently accommodate and process structurally similar amino acids such as valine, to avoid such errors it has two additional distinct tRNA(Ile)-dependent editing activities. One activity is designated as 'pretransfer' editing and involves the hydrolysis of activated Val-AMP. The other activity is designated 'posttransfer' editing and involves deacylation of mischarged Val-tRNA(Ile). The polypeptide is Isoleucine--tRNA ligase (Cupriavidus metallidurans (strain ATCC 43123 / DSM 2839 / NBRC 102507 / CH34) (Ralstonia metallidurans)).